Consider the following 944-residue polypeptide: ATP-dependent helicase fft1 (944 aa).

2 disordered regions span residues 89–109 and 174–246; these read AAYD…ESSN and SAQK…NSIP. The segment covering 92 to 108 has biased composition (basic and acidic residues); the sequence is DPHDQPPERDVSLKESS. Positions 174-184 are enriched in polar residues; it reads SAQKLNNQPIE. Basic and acidic residues predominate over residues 186–203; it reads SSVDKENAKRKRYVEEGT. The segment covering 217 to 227 has biased composition (acidic residues); it reads LSDEETNEDDL. The span at 230 to 246 shows a compositional bias: polar residues; the sequence is QSPTACTTDANIDNSIP. The Helicase ATP-binding domain maps to 426–592; sequence CLMYKAKLSG…ISLLAFMLPK (167 aa). 439 to 446 lines the ATP pocket; the sequence is DEMGLGKT. The DEGH box motif lies at 543-546; it reads DEGH. The 158-residue stretch at 766-923 folds into the Helicase C-terminal domain; sequence KVKKLCSLLK…DSEKIQKEIS (158 aa).

The protein belongs to the SNF2/RAD54 helicase family.

The protein localises to the nucleus. The catalysed reaction is ATP + H2O = ADP + phosphate + H(+). In terms of biological role, DNA helicase that possesses intrinsic ATP-dependent nucleosome-remodeling activity and is required for heterochromatin organization. This Schizosaccharomyces pombe (strain 972 / ATCC 24843) (Fission yeast) protein is ATP-dependent helicase fft1 (fft1).